Here is a 496-residue protein sequence, read N- to C-terminus: PE-PGRS family protein PE_PGRS1 (496 aa).

The 91-residue stretch at 4 to 94 folds into the PE domain; the sequence is LITSPATVAA…VCYAAAETAN (91 aa). A disordered region spans residues 461-480; it reads LIGNGGDGGPGMFGGPGGAG.

This sequence belongs to the mycobacterial PE family. PGRS subfamily.

It is found in the secreted. It localises to the cell wall. The protein localises to the host mitochondrion. When expressed in host mitochondria, induces mitochondrial stress which results in mitochondrial membrane depolarization, up-regulation of mitochondrial superoxides and release of cytochrome-C in the cytoplasm. The cytochrome-C in cytoplasm triggers the activation of caspase-9, caspase-3 and caspase-7, leading to the apoptosis of host macrophages. Being a late expressing protein, apoptosis induction by PE_PGRS1 may facilitate the M.tuberculosis survival and silent expansion of its niche at the site of granuloma. Its function is as follows. When expressed in THP-1 macrophages, promotes the survival of mycobacteria within macrophages after a 24- to 48-hour infection by blocking endoplasmic reticulum stress and inhibiting host cell apoptosis. Can chelate excessive intracellular calcium in THP-1 macrophages, which reduces the concentration of intracellular free Ca(2+) and blocks the PERK-eIF2alpha-ATF4 axis, thereby inhibiting the endoplasmic reticulum stress caused by infection. It also reduces the apoptosis of THP-1 macrophages by decreasing the activation of caspase-3 and caspase-9. In Mycobacterium tuberculosis (strain ATCC 25618 / H37Rv), this protein is PE-PGRS family protein PE_PGRS1.